A 157-amino-acid chain; its full sequence is Small ribosomal subunit protein uS7cz/uS7cy (157 aa).

It belongs to the universal ribosomal protein uS7 family. Part of the 30S ribosomal subunit.

Its subcellular location is the plastid. The protein localises to the chloroplast. Its function is as follows. One of the primary rRNA binding proteins, it binds directly to 16S rRNA where it nucleates assembly of the head domain of the 30S subunit. The chain is Small ribosomal subunit protein uS7cz/uS7cy (rps7-A) from Welwitschia mirabilis (Tree tumbo).